The sequence spans 479 residues: POU domain, class 2, transcription factor 2 (479 aa).

Disordered regions lie at residues 1–86 (MVHS…AQPH), 166–200 (TQAV…PSDL), 275–298 (SSLP…GRRR), 357–393 (PCSA…SQAS), and 409–479 (TLHP…PYQP). Residues 12–37 (RMSKPLEAEKQGLDSPSEHTDTERNG) show a composition bias toward basic and acidic residues. The span at 38–60 (PDTNHQNPQNKTSPFSVSPTGPS) shows a compositional bias: polar residues. The segment covering 76 to 85 (APLPPQPAQP) has biased composition (pro residues). Residues 195 to 269 (EEPSDLEELE…LLEKWLNDAE (75 aa)) enclose the POU-specific domain. The segment covering 275 to 288 (SSLPSPNQLSSPSL) has biased composition (low complexity). The homeobox DNA-binding region spans 297-356 (RRKKRTSIETNVRFALEKSFLANQKPTSEEILLIAEQLHMEKEVIRVWFCNRRQKEKRIN). The interval 389-410 (LSQASSSLSTTVTTLSSAVGTL) is leucine-zipper. The span at 416-425 (AGGGGGGGGA) shows a compositional bias: gly residues.

The protein belongs to the POU transcription factor family. Class-2 subfamily. As to quaternary structure, interacts with NR3C1, AR and PGR. Interacts with POU2AF1; the interaction increases POU2F2 transactivation activity. Isoform 3 is B-cell specific. Isoform 5 is expressed in B-cells and the immunoglobulin-expressing T-cell line MOLT-4, but not in the T-cell line BW5147.

The protein localises to the cytoplasm. Its subcellular location is the nucleus. Transactivation activity is enhanced by transcriptional coactivator POU2AF1. Its function is as follows. Transcription factor that specifically binds to the octamer motif (5'-ATTTGCAT-3'). Regulates IL6 expression in B cells with POU2AF1. Regulates transcription in a number of tissues in addition to activating immunoglobulin gene expression. Modulates transcription transactivation by NR3C1, AR and PGR. In terms of biological role, activates the U2 small nuclear RNA (snRNA) promoter. The chain is POU domain, class 2, transcription factor 2 from Homo sapiens (Human).